A 2395-amino-acid polypeptide reads, in one-letter code: Helicase ssl-1 (2395 aa).

Low complexity predominate over residues Met1–Arg12. The disordered stretch occupies residues Met1–Asp62. In terms of domain architecture, HSA spans Leu227–Gly300. Residues Leu354–Ile363 are compositionally biased toward polar residues. 2 disordered regions span residues Leu354–Glu404 and Glu444–Leu504. Composition is skewed to basic and acidic residues over residues Ser365–Lys375, Lys394–Glu404, and Glu444–Lys462. Positions Thr388–Glu464 form a coiled coil. A compositionally biased stretch (polar residues) spans Ser470–Asp490. The Helicase ATP-binding domain occupies Val570 to Thr735. Position 583-590 (Asp583–Thr590) interacts with ATP. The segment at Ala963–Thr982 is disordered. In terms of domain architecture, Helicase C-terminal spans Leu1196–Thr1342. Positions Lys1452 to Asn1476 form a coiled coil. Disordered regions lie at residues Glu1615–Asp1706, Ser1977–Ala2073, Gln2092–Arg2143, Gln2276–Val2306, and Met2350–Asn2395. 2 stretches are compositionally biased toward low complexity: residues Gln1647–Gln1669 and Leu1981–Gln1995. Polar residues predominate over residues Asn1996–Asn2019. 2 stretches are compositionally biased toward low complexity: residues Leu2051 to Ala2073 and Gln2092 to Asp2114. The segment covering Gly2115–Ser2129 has biased composition (gly residues). A compositionally biased stretch (low complexity) spans Gln2130 to Gln2142. A compositionally biased stretch (gly residues) spans Asn2281–Gln2299. The span at Gln2361–Pro2377 shows a compositional bias: low complexity.

This sequence belongs to the SNF2/RAD54 helicase family. SWR1 subfamily.

The protein resides in the nucleus. Its function is as follows. Probable catalytic component of a chromatin-remodeling complex which mediates the ATP-dependent exchange of histone H2A variant H2AV/htz-1 for H2A, leading to transcriptional regulation of selected genes by chromatin remodeling. Involved in foregut development, and may be involved in vulval development. In Caenorhabditis elegans, this protein is Helicase ssl-1 (ssl-1).